Consider the following 203-residue polypeptide: Urease accessory protein UreG (203 aa).

13–20 is a binding site for GTP; sequence GPVGSGKT.

Belongs to the SIMIBI class G3E GTPase family. UreG subfamily. As to quaternary structure, homodimer. UreD, UreF and UreG form a complex that acts as a GTP-hydrolysis-dependent molecular chaperone, activating the urease apoprotein by helping to assemble the nickel containing metallocenter of UreC. The UreE protein probably delivers the nickel.

It is found in the cytoplasm. Functionally, facilitates the functional incorporation of the urease nickel metallocenter. This process requires GTP hydrolysis, probably effectuated by UreG. This Psychromonas ingrahamii (strain DSM 17664 / CCUG 51855 / 37) protein is Urease accessory protein UreG.